The sequence spans 598 residues: Beta-myrcene/(E)-beta-ocimene synthase 2, chloroplastic (598 aa).

A chloroplast-targeting transit peptide spans 1–30; sequence MATLCIGSAPIYQNACIHNFRLQRPRRFIS. The (2E)-geranyl diphosphate site is built by R307, D344, D348, R486, and N489. Positions 344 and 348 each coordinate Mg(2+). Positions 344–348 match the DDXXD motif motif; it reads DDIYD. 3 residues coordinate Mg(2+): N489, T493, and E497.

It belongs to the terpene synthase family. Tpsb subfamily. Mg(2+) is required as a cofactor. The cofactor is Mn(2+). As to expression, expressed exclusively in mature flowers, but not in inmmature buds.

The protein resides in the plastid. The protein localises to the chloroplast. It catalyses the reaction (2E)-geranyl diphosphate = beta-myrcene + diphosphate. It participates in secondary metabolite biosynthesis; terpenoid biosynthesis. Involved in monoterpene (C10) biosynthesis. The major products are alpha- and beta-pinene, sabinene, beta-myrcene, (E)-beta-ocimene and limonene. The sequence is that of Beta-myrcene/(E)-beta-ocimene synthase 2, chloroplastic (TPS24) from Arabidopsis thaliana (Mouse-ear cress).